A 441-amino-acid polypeptide reads, in one-letter code: Endoglucanase E-2 (441 aa).

A signal peptide (tat-type signal) is located at residues 1 to 31 (MSPRPLRALLGAAAAALVSAAALAFPSQAAA). The interval 32–320 (NDSPFYVNPN…YEMAIAAGGT (289 aa)) is catalytic. The active site involves D110. 2 cysteine pairs are disulfide-bonded: C111/C156 and C263/C298. The active-site Proton donor is D148. D296 serves as the catalytic Nucleophile. The tract at residues 317-343 (AGGTNPNPNPNPTPTPTPTPTPPPGSS) is disordered. Residues 321-340 (NPNPNPNPTPTPTPTPTPPP) form a linker region. The segment covering 323 to 341 (NPNPNPTPTPTPTPTPPPG) has biased composition (pro residues). One can recognise a CBM2 domain in the interval 339–441 (PPGSSGACTA…SVPTLTCAAS (103 aa)). An intrachain disulfide couples C346 to C438.

It belongs to the glycosyl hydrolase 6 (cellulase B) family. In terms of assembly, homodimer. Predicted to be exported by the Tat system. The position of the signal peptide cleavage has been experimentally proven.

It carries out the reaction Endohydrolysis of (1-&gt;4)-beta-D-glucosidic linkages in cellulose, lichenin and cereal beta-D-glucans.. Its pathway is glycan metabolism; cellulose degradation. The chain is Endoglucanase E-2 (celB) from Thermobifida fusca (Thermomonospora fusca).